The sequence spans 409 residues: Argininosuccinate synthase (409 aa).

ATP-binding positions include 11–19 (AYSGGLDTS) and Ala38. The L-citrulline site is built by Tyr91 and Ser96. Gly121 is an ATP binding site. L-aspartate-binding residues include Thr123, Asn127, and Asp128. Residue Asn127 coordinates L-citrulline. L-citrulline is bound by residues Arg131, Ser182, Ser191, Glu267, and Tyr279.

The protein belongs to the argininosuccinate synthase family. Type 1 subfamily. In terms of assembly, homotetramer.

The protein localises to the cytoplasm. The catalysed reaction is L-citrulline + L-aspartate + ATP = 2-(N(omega)-L-arginino)succinate + AMP + diphosphate + H(+). The protein operates within amino-acid biosynthesis; L-arginine biosynthesis; L-arginine from L-ornithine and carbamoyl phosphate: step 2/3. In Xanthobacter autotrophicus (strain ATCC BAA-1158 / Py2), this protein is Argininosuccinate synthase.